Consider the following 216-residue polypeptide: Peptide methionine sulfoxide reductase MsrA (216 aa).

C57 is an active-site residue.

The protein belongs to the MsrA Met sulfoxide reductase family.

The catalysed reaction is L-methionyl-[protein] + [thioredoxin]-disulfide + H2O = L-methionyl-(S)-S-oxide-[protein] + [thioredoxin]-dithiol. It carries out the reaction [thioredoxin]-disulfide + L-methionine + H2O = L-methionine (S)-S-oxide + [thioredoxin]-dithiol. In terms of biological role, has an important function as a repair enzyme for proteins that have been inactivated by oxidation. Catalyzes the reversible oxidation-reduction of methionine sulfoxide in proteins to methionine. The protein is Peptide methionine sulfoxide reductase MsrA of Agrobacterium fabrum (strain C58 / ATCC 33970) (Agrobacterium tumefaciens (strain C58)).